Consider the following 900-residue polypeptide: Translation initiation factor IF-2 (900 aa).

Residues 80–95 (LEEQSRKTVEKEDQLR) are compositionally biased toward basic and acidic residues. 3 disordered regions span residues 80-106 (LEEQ…VPGR), 149-169 (AVEA…DSPV), and 221-268 (DEFD…VDEK). A compositionally biased stretch (basic residues) spans 253–262 (GKKKGKKKKK). Residues 397 to 567 (TRPPVVTIMG…LTEAEVRELK (171 aa)) form the tr-type G domain. Positions 406-413 (GHVDHGKT) are G1. Residue 406–413 (GHVDHGKT) participates in GTP binding. The interval 431-435 (GITQH) is G2. The tract at residues 453-456 (DTPG) is G3. GTP is bound by residues 453-457 (DTPGH) and 507-510 (NKID). The segment at 507–510 (NKID) is G4. The interval 543–545 (SAK) is G5.

The protein belongs to the TRAFAC class translation factor GTPase superfamily. Classic translation factor GTPase family. IF-2 subfamily.

The protein resides in the cytoplasm. Functionally, one of the essential components for the initiation of protein synthesis. Protects formylmethionyl-tRNA from spontaneous hydrolysis and promotes its binding to the 30S ribosomal subunits. Also involved in the hydrolysis of GTP during the formation of the 70S ribosomal complex. The sequence is that of Translation initiation factor IF-2 from Chlorobium phaeovibrioides (strain DSM 265 / 1930) (Prosthecochloris vibrioformis (strain DSM 265)).